The primary structure comprises 659 residues: MSLRNRTNPNSIYVKGILKFPGYQTNLDLHCYVDTGSSLCMASKYVIPEEYWQTAEKPLNIKIANGKIIQLTKVCSKLPIRLGGERFLIPTLFQQESGIDLLLGNNFCQLYSPFIQYTDRIYFHLNKQSVIIGKITKAYQYGVKGFLESMKKKSKVNRPEPINITSNQHLFLEEGGNHVDEMLYEIQISKFSAIEEMLERVSSENPIDPEKSKQWMTATIELIDPKTVVKVKPMSYSPSDREEFDRQIKELLELKVIKPSKSTHMSPAFLVENEAERRRGKKRMVVNYKAMNKATKGDAHNLPNKDELLTLVRGKKIYSSFDCKSGLWQVLLDKESQLLTAFTCPQGHYQWNVVPFGLKQAPSIFPKTYANSHSNQYSKYCCVYVDDILVFSNTGRKEHYIHVLNILRRCEKLGIILSKKKAQLFKEKINFLGLEIDQGTHCPQNHILEHIHKFPDRIEDKKQLQRFLGILTYASDYIPKLASIRKPLQSKLKEDSTWTWNDTDSQYMAKIKKNLKSFPKLYHPEPNDKLVIETDASEEFWGGILKAIHNSHEYICRYASGSFKAAERNYHSNEKELLAVIRVIKKFSIYLTPSRFLIRTDNKNFTHFVNINLKGDRKQGRLVRWQMWLSQYDFDVEHIAGTKNVFADFLQENTLTNYV.

The interval Met1 to Asp180 is protease. Asp34 is a catalytic residue. The region spanning Leu252–Ile436 is the Reverse transcriptase domain.

This sequence belongs to the caulimoviridae enzymatic polyprotein family.

The catalysed reaction is DNA(n) + a 2'-deoxyribonucleoside 5'-triphosphate = DNA(n+1) + diphosphate. Its function is as follows. Encodes for at least two polypeptides: protease (PR) and reverse transcriptase (RT). The protease processes the polyprotein in cis. Reverse transcriptase is multifunctional enzyme that converts the viral RNA genome into dsDNA in viral cytoplasmic capsids. This enzyme displays a DNA polymerase activity that can copy either DNA or RNA templates, and a ribonuclease H (RNase H) activity that cleaves the RNA strand of RNA-DNA heteroduplexes in a partially processive 3'- to 5'-endonucleasic mode. Neo-synthesized pregenomic RNA (pgRNA) are encapsidated, and reverse-transcribed inside the nucleocapsid. Partial (+)DNA is synthesized from the (-)DNA template and generates the relaxed circular DNA (RC-DNA) genome. After budding and infection, the RC-DNA migrates in the nucleus, and is converted into a plasmid-like covalently closed circular DNA (cccDNA). This chain is Enzymatic polyprotein, found in Dianthus caryophyllus (Carnation).